A 349-amino-acid polypeptide reads, in one-letter code: Isopentenyl-diphosphate delta-isomerase (349 aa).

Substrate is bound at residue 6–7 (RK). FMN-binding positions include 62-64 (AMT), Ser93, and Asn122. Gln152 contacts substrate. Glu153 is a Mg(2+) binding site. Residues Lys184, Thr214, 258-259 (GG), and 280-281 (AG) contribute to the FMN site.

Belongs to the IPP isomerase type 2 family. As to quaternary structure, homooctamer. Dimer of tetramers. FMN is required as a cofactor. Requires NADPH as cofactor. The cofactor is Mg(2+).

The protein localises to the cytoplasm. It catalyses the reaction isopentenyl diphosphate = dimethylallyl diphosphate. Involved in the biosynthesis of isoprenoids. Catalyzes the 1,3-allylic rearrangement of the homoallylic substrate isopentenyl (IPP) to its allylic isomer, dimethylallyl diphosphate (DMAPP). The polypeptide is Isopentenyl-diphosphate delta-isomerase (Bacillus cereus (strain ATCC 14579 / DSM 31 / CCUG 7414 / JCM 2152 / NBRC 15305 / NCIMB 9373 / NCTC 2599 / NRRL B-3711)).